Consider the following 406-residue polypeptide: Probable sodium/metabolite cotransporter BASS1, chloroplastic (406 aa).

A chloroplast-targeting transit peptide spans 1–64 (MPLLRRPPAA…RHLCGIPSSR (64 aa)). 9 helical membrane-spanning segments follow: residues 98–118 (VGEV…AVAL), 123–143 (AFLW…MLGM), 152–172 (LKTA…QYSV), 187–209 (PSYY…SNIV), 217–237 (VALS…LTPL), 252–272 (MGLF…GALL), 278–298 (GLVQ…VAVL), 315–335 (LQVV…GYVL), and 376–396 (VPCA…AGIW).

It belongs to the bile acid:sodium symporter (BASS) (TC 2.A.28) family.

The protein localises to the membrane. The protein resides in the plastid. It is found in the chloroplast envelope. May function as sodium-coupled metabolite transporter across the chloroplast envelope. The chain is Probable sodium/metabolite cotransporter BASS1, chloroplastic (BASS1) from Oryza sativa subsp. japonica (Rice).